Consider the following 1119-residue polypeptide: MSVRGIRIWRRNDARFQPSILVEKNGLDGSLLFQGGAIATLDSDSTDVERRSYQKIVDAYGILGVLAITKDEAVLVAVTGVLSVGQLYGADILKITNVEFISLRTFGSVENVDSRIIDLQRLLSSQMFYFSSLQSYDLTRSAQHRDSHDCSDARFFWNRSLHFSFQRYGIDTDNWLLKCMAGSVLVRVVYVGANTGRVALISRLSCERVGTRFNVRGANYLGNVANFVETEQLLLFDEKECSLLQIRGSIPLFWEQPGVNVGSHKVKLRAFETSLPAYHRHLSQLQHRYGEFAIVNLLGRKEGERVLGDAFKTQHKSSHFAPLVDFIDFDYHAQMKISKEAIVQLKKKMSPHMTKHGFFYSMGKEIVKRQTGVIRTNCLDCLDRTNAVQTAIGLQMSHDQVAFLNLNAGKVNVEQRVEEILRDLWQKNGDQCSTIYAGTGALDGKSKLKDASRSLARTIQNNLMDGAKQESFDLFLTGAAYDPRLFDRACNILPPSLIQESYYYHEYADAVSQLVERSPEIAEPQSIKIFVGTWNVNGGKNIHNVAFRNESSLSHWIFANSMTRLVSVEDEQLADIVAIGVEELVDLNASNMVKASTTNQRMWCESIRKTLSEKAPFVLIGSEQLVGVCLFLFARPRVSPYLKDFAVASVKTGMGGATGNKGSVAFRIVVFSTSICFICSHFAAGQNEIRDRNEDFATTLKKIRFPLGREIDSHDVIFWLGDFNYRINLSGDEVKNAVRNGDYAKLVENDQLTQQKALGQTFVGFNEGQLTFAPTYKYDTFSDDYDTSEKCRAPAWTDRILWKDQRKKGKTQLLSYDRSELKTSDHRPVGAVFKVETFKVGGRKCVELIEDVVESMGPPDGTIIVSIAGKPRFPPQMFPPIHEKLKELGAQVQLSKFDDGDLWIVLNSGEMALAALSMDGLKIGGTDQINVKLKSPDWAYALKPHLSDFDLESFEVTAEEEALLGGTDGAVFEFADEDEDAISVSSLTLTGSAPDRPRPPSARSEAISVAKLEWPTEQPNVLSTSMPTRASSASLANSSWYEHVPPLAPPQSNNNKSPPQACLFNPFTQSAPSPAPPPSTIPLPPTRGASVGPGPPAVPVRKAPPPPPRPVIPPRPKNM.

The SAC domain occupies 119–438 (LQRLLSSQMF…GDQCSTIYAG (320 aa)). The segment at 532-826 (GTWNVNGGKN…DRSELKTSDH (295 aa)) is catalytic. Disordered regions lie at residues 986–1005 (SLTL…ARSE) and 1042–1119 (EHVP…PKNM). Positions 1050–1072 (PQSNNNKSPPQACLFNPFTQSAP) are enriched in low complexity. Composition is skewed to pro residues over residues 1073 to 1085 (SPAP…PLPP) and 1093 to 1119 (PGPP…PKNM).

Belongs to the synaptojanin family. The protein in the central section; belongs to the inositol 1,4,5-trisphosphate 5-phosphatase family.

The protein localises to the cytoplasmic vesicle. Its subcellular location is the secretory vesicle. It localises to the synaptic vesicle. It is found in the synapse. It catalyses the reaction a 1,2-diacyl-sn-glycero-3-phospho-(1D-myo-inositol-4,5-bisphosphate) + H2O = a 1,2-diacyl-sn-glycero-3-phospho-(1D-myo-inositol 4-phosphate) + phosphate. In terms of biological role, probable inositol 5-phosphatase which regulates synaptic vesicle recycling in neurons by regulating clathrin-mediated endocytosis. In Caenorhabditis elegans, this protein is Synaptojanin.